The primary structure comprises 249 residues: Adenylate kinase (249 aa).

43 to 48 contributes to the ATP binding site; the sequence is GAGKGT. The segment at 63 to 92 is NMP; the sequence is ATGDMLRAQVAAKTALGVEAKKIMDQGGLV. Residues Thr64, Arg69, 90–92, 119–122, and Gln126 contribute to the AMP site; these read GLV and GFPR. An LID region spans residues 160-197; sequence GRLVHPASGRSYHKLFNPPKKNMIDDITGEPLVQRSDD. ATP contacts are provided by residues Arg161 and 170 to 171; that span reads SY. Residues Arg194 and Arg205 each contribute to the AMP site. Gln233 is a binding site for ATP.

This sequence belongs to the adenylate kinase family. AK2 subfamily. In terms of assembly, monomer.

It is found in the cytoplasm. It localises to the cytosol. Its subcellular location is the mitochondrion intermembrane space. It carries out the reaction AMP + ATP = 2 ADP. In terms of biological role, catalyzes the reversible transfer of the terminal phosphate group between ATP and AMP. Plays an important role in cellular energy homeostasis and in adenine nucleotide metabolism. Adenylate kinase activity is critical for regulation of the phosphate utilization and the AMP de novo biosynthesis pathways. This is Adenylate kinase from Scheffersomyces stipitis (strain ATCC 58785 / CBS 6054 / NBRC 10063 / NRRL Y-11545) (Yeast).